Reading from the N-terminus, the 995-residue chain is MTRDEDNGFSEWGGYFEAKKSKLEEQFAAASDPFRKSDLFQGISIFVNGRTDPSADELKRIMMVHGGTFHHYERSHTTYIIASVLPDVKVRNMNLSKFISAKWVVDCLEKKKIVDYKPYLLYTNQKTSQPMLIFGKPKDNGANESKSDVEPPKDKAEVEVDSTKDETQMELGGILKNLQQAVATSPEKEASASESKITNLSTTSNNSTTARTAADPNFLSEFYKNSRLHHIATLGAGFKQYVCRLRQKHGTQGFPKRETLKSLANSHHNCLERYVMHIDMDCFFVSVGLRTRPELRGLPIAVTHSKGGNAATDVPVHPQADRKAELELFAQRFEHHFHDGDKAEKVRSGFDKKMSLSEIASCSYEAREKGIRNGMFVGQALKLCPELKTIPYDFEGYKEVAFTLYDTVAQYTLNIEAVSCDEMFVELTDLAHELNVDVMAFVSHLRQEVYSKTGCPCSAGVAGNKLLARMATKEAKPNGQFLLDSSNDILAYMAPMSLDLLPGVGSSISHKLKQAGLNNCGDVQNTTLEKMEKVLGKKLGQNLFQNCRGIDDRPLAYEQIRKTVSAEMNFGIRFTNSVECEQFLCQLSEEVTKRLVEIRRKARSINLKIMVRAAEAPVETSKYMGHGVCDIINKSSLIKYATDDVNVITTVVLDLMKDADIPPDELRGLGIHLTRLEDANEVRKENNIKEMFGKMSEMRKDKPIPQGAVGDKSIGDDKVNKPLVFENKPKPREPRNVLSMLTAAAVSRKSVTEDRSQRGTSKPITRPLSLVPKLDEDVLAQLPEDIRLEVIANREEHLCIAEYDGYRSPQYPTLRSPPLLNPYVTTNVSPLKATDLKPSTSRAAVARLQKRKERKEQEHYIRSDQIVADYIDDLPDFVNPHILKLISHPVEMPELLMGDNYKDLLNDWVSREEVPKPNDVDLILKQVSRMIKNDQLDHVCDVMKYWCRIINMKRSSSCCWHVAYKHIEESIQNQMLTIEGYSLLFIEYIRCIKCS.

Residues 35 to 121 (RKSDLFQGIS…KIVDYKPYLL (87 aa)) form the BRCT domain. 2 disordered regions span residues 135–164 (GKPKDNGANESKSDVEPPKDKAEVEVDSTK) and 182–211 (VATSPEKEASASESKITNLSTTSNNSTTAR). The segment covering 136–164 (KPKDNGANESKSDVEPPKDKAEVEVDSTK) has biased composition (basic and acidic residues). Positions 192–211 (ASESKITNLSTTSNNSTTAR) are enriched in low complexity. The UmuC domain occupies 275 to 505 (VMHIDMDCFF…MSLDLLPGVG (231 aa)). Mg(2+) is bound at residue D279. Residues 361 to 367 (SCSYEAR), N373, and D421 each bind dCTP. Position 421 (D421) interacts with Mg(2+). Residue E422 is part of the active site. The interaction with PolI stretch occupies residues 696–868 (SEMRKDKPIP…HYIRSDQIVA (173 aa)). Positions 878 to 995 (VNPHILKLIS…IEYIRCIKCS (118 aa)) are interaction with PolH/DNApol-eta.

This sequence belongs to the DNA polymerase type-Y family. Interacts (via C-terminus) with PolH/DNApol-eta (via C-terminal regions). Interacts (via C-terminus) with PolI. Mg(2+) serves as cofactor.

It localises to the nucleus. Functionally, deoxycytidyl transferase involved in DNA repair. Transfers a dCMP residue from dCTP to the 3'-end of a DNA primer in a template-dependent reaction. May assist in the first step in the bypass of abasic lesions by the insertion of a nucleotide opposite the lesion. Required for normal induction of mutations by physical and chemical agents. During homologous recombination (HR) repair of DNA double-strand breaks (DSBs) regulates the extent of repair synthesis. Possibly recruits the DNA polymerase zeta complex or another translesion polymerase to early DSB repair intermediates to initiate repair synthesis, while also blocking the access of more processive polymerases preventing them from acting during the initial stages of HR repair. This Drosophila melanogaster (Fruit fly) protein is DNA repair protein Rev1.